Consider the following 176-residue polypeptide: Endoribonuclease YbeY (176 aa).

Zn(2+) contacts are provided by His-128, His-132, and His-138.

Belongs to the endoribonuclease YbeY family. Zn(2+) serves as cofactor.

The protein resides in the cytoplasm. Single strand-specific metallo-endoribonuclease involved in late-stage 70S ribosome quality control and in maturation of the 3' terminus of the 16S rRNA. In Zymomonas mobilis subsp. mobilis (strain ATCC 31821 / ZM4 / CP4), this protein is Endoribonuclease YbeY.